Consider the following 139-residue polypeptide: Small ribosomal subunit protein uS9 (139 aa).

This sequence belongs to the universal ribosomal protein uS9 family.

The polypeptide is Small ribosomal subunit protein uS9 (Coxiella burnetii (strain CbuG_Q212) (Coxiella burnetii (strain Q212))).